We begin with the raw amino-acid sequence, 344 residues long: Exopolyphosphatase 1 (344 aa).

The tract at residues 319-344 (VHTSVRAVGGQPADRNAANRSRGSKP) is disordered.

Belongs to the GppA/Ppx family. As to quaternary structure, homodimer.

The catalysed reaction is [phosphate](n) + H2O = [phosphate](n-1) + phosphate + H(+). Degradation of inorganic polyphosphates (polyP). Releases orthophosphate processively from the ends of the polyP chain. This chain is Exopolyphosphatase 1, found in Mycobacterium bovis (strain ATCC BAA-935 / AF2122/97).